Here is a 51-residue protein sequence, read N- to C-terminus: Mitochondrial import receptor subunit TOM5 homolog (51 aa).

At methionine 1 the chain carries N-acetylmethionine. Residue lysine 10 forms a Glycyl lysine isopeptide (Lys-Gly) (interchain with G-Cter in SUMO2) linkage. The helical transmembrane segment at 27–45 (SIRNFLIYVALLRVTPYIL) threads the bilayer.

This sequence belongs to the Tom5 family. In terms of assembly, forms part of the preprotein translocase complex of the outer mitochondrial membrane (TOM complex) which consists of at least 7 different proteins (TOMM5, TOMM6, TOMM7, TOMM20, TOMM22, TOMM40 and TOMM70).

It localises to the mitochondrion outer membrane. The polypeptide is Mitochondrial import receptor subunit TOM5 homolog (Mus musculus (Mouse)).